We begin with the raw amino-acid sequence, 365 residues long: Anhydro-N-acetylmuramic acid kinase (365 aa).

12 to 19 (GTSLDGID) serves as a coordination point for ATP.

This sequence belongs to the anhydro-N-acetylmuramic acid kinase family.

It carries out the reaction 1,6-anhydro-N-acetyl-beta-muramate + ATP + H2O = N-acetyl-D-muramate 6-phosphate + ADP + H(+). Its pathway is amino-sugar metabolism; 1,6-anhydro-N-acetylmuramate degradation. It participates in cell wall biogenesis; peptidoglycan recycling. Catalyzes the specific phosphorylation of 1,6-anhydro-N-acetylmuramic acid (anhMurNAc) with the simultaneous cleavage of the 1,6-anhydro ring, generating MurNAc-6-P. Is required for the utilization of anhMurNAc either imported from the medium or derived from its own cell wall murein, and thus plays a role in cell wall recycling. This chain is Anhydro-N-acetylmuramic acid kinase, found in Rhizorhabdus wittichii (strain DSM 6014 / CCUG 31198 / JCM 15750 / NBRC 105917 / EY 4224 / RW1) (Sphingomonas wittichii).